We begin with the raw amino-acid sequence, 432 residues long: Trigger factor (432 aa).

A PPIase FKBP-type domain is found at 161-246 (EDRVTIDFTG…LKKVEERELP (86 aa)).

The protein belongs to the FKBP-type PPIase family. Tig subfamily. As to quaternary structure, homodimer and monomer. In vivo most of the ribosomes are in complex with monomeric TF. Uncomplexed TF, however, is in a monomer-dimer equilibrium with approximately two thirds of TF existing in a dimeric state.

Its subcellular location is the cytoplasm. The enzyme catalyses [protein]-peptidylproline (omega=180) = [protein]-peptidylproline (omega=0). Its function is as follows. Involved in protein export. Acts as a chaperone by maintaining the newly synthesized protein in an open conformation. Functions as a peptidyl-prolyl cis-trans isomerase. In Escherichia coli O139:H28 (strain E24377A / ETEC), this protein is Trigger factor.